The following is a 118-amino-acid chain: Non-specific lipid-transfer protein 1 (118 aa).

A signal peptide spans 1 to 20 (MARLAVAIAVVAAVVVVLAA). 4 disulfide bridges follow: Cys-29–Cys-77, Cys-39–Cys-54, Cys-55–Cys-100, and Cys-75–Cys-114.

Belongs to the plant LTP family.

Functionally, plant non-specific lipid-transfer proteins transfer phospholipids as well as galactolipids across membranes. May play a role in wax or cutin deposition in the cell walls of expanding epidermal cells and certain secretory tissues. The chain is Non-specific lipid-transfer protein 1 (LTP1) from Sorghum bicolor (Sorghum).